The primary structure comprises 313 residues: Porphobilinogen deaminase (313 aa).

An S-(dipyrrolylmethanemethyl)cysteine modification is found at Cys242.

It belongs to the HMBS family. Monomer. The cofactor is dipyrromethane.

It carries out the reaction 4 porphobilinogen + H2O = hydroxymethylbilane + 4 NH4(+). It participates in porphyrin-containing compound metabolism; protoporphyrin-IX biosynthesis; coproporphyrinogen-III from 5-aminolevulinate: step 2/4. Functionally, tetrapolymerization of the monopyrrole PBG into the hydroxymethylbilane pre-uroporphyrinogen in several discrete steps. This is Porphobilinogen deaminase from Salmonella dublin (strain CT_02021853).